We begin with the raw amino-acid sequence, 181 residues long: NADH-quinone oxidoreductase subunit I (181 aa).

2 4Fe-4S ferredoxin-type domains span residues 52–81 (TRDSSGRERCVACNLCAVACPVGCISLKKG) and 91–120 (KFFRINFSRCIFCGMCEEACPTAAIQLTPD). [4Fe-4S] cluster is bound by residues Cys-61, Cys-64, Cys-67, Cys-71, Cys-100, Cys-103, Cys-106, and Cys-110.

It belongs to the complex I 23 kDa subunit family. As to quaternary structure, NDH-1 is composed of 13 different subunits. Subunits NuoA, H, J, K, L, M, N constitute the membrane sector of the complex. [4Fe-4S] cluster serves as cofactor.

The protein resides in the cell inner membrane. The catalysed reaction is a quinone + NADH + 5 H(+)(in) = a quinol + NAD(+) + 4 H(+)(out). In terms of biological role, NDH-1 shuttles electrons from NADH, via FMN and iron-sulfur (Fe-S) centers, to quinones in the respiratory chain. The immediate electron acceptor for the enzyme in this species is believed to be ubiquinone. Couples the redox reaction to proton translocation (for every two electrons transferred, four hydrogen ions are translocated across the cytoplasmic membrane), and thus conserves the redox energy in a proton gradient. The sequence is that of NADH-quinone oxidoreductase subunit I from Blochmanniella pennsylvanica (strain BPEN).